We begin with the raw amino-acid sequence, 223 residues long: Octanoyltransferase (223 aa).

A BPL/LPL catalytic domain is found at 30 to 214; sequence DLDRDCFLLT…IVADLFGEFT (185 aa). Residues 75-82, 144-146, and 157-159 contribute to the substrate site; these read RGGEITYH, SIG, and GFA. Cysteine 175 (acyl-thioester intermediate) is an active-site residue.

Belongs to the LipB family.

It is found in the cytoplasm. It carries out the reaction octanoyl-[ACP] + L-lysyl-[protein] = N(6)-octanoyl-L-lysyl-[protein] + holo-[ACP] + H(+). It participates in protein modification; protein lipoylation via endogenous pathway; protein N(6)-(lipoyl)lysine from octanoyl-[acyl-carrier-protein]: step 1/2. Its function is as follows. Catalyzes the transfer of endogenously produced octanoic acid from octanoyl-acyl-carrier-protein onto the lipoyl domains of lipoate-dependent enzymes. Lipoyl-ACP can also act as a substrate although octanoyl-ACP is likely to be the physiological substrate. The polypeptide is Octanoyltransferase (Desulfotalea psychrophila (strain LSv54 / DSM 12343)).